The sequence spans 1176 residues: Growth-differentiation transition protein 5 (1176 aa).

A signal peptide spans 1 to 25 (MKNNFFKKTIILLIFLSIFILYSNA). The Extracellular portion of the chain corresponds to 26 to 913 (DEETITTPPG…DVPANENTLN (888 aa)). Residues 914–934 (LLTIVLPICSAVVVASSVMLG) form a helical membrane-spanning segment. The Cytoplasmic portion of the chain corresponds to 935-1176 (RLFYKKKFKK…NVGYNVHEYF (242 aa)). Composition is skewed to low complexity over residues 965-974 (SNIENKSESI) and 1053-1066 (PQISPDSPQHSIPS). 2 disordered regions span residues 965-985 (SNIENKSESIATPQQRNEQKE) and 1050-1080 (VDTPQISPDSPQHSIPSSSPPPPPLPLPPST). Residues 1067 to 1078 (SSPPPPPLPLPP) are compositionally biased toward pro residues.

The protein belongs to the GDT family.

The protein resides in the membrane. This chain is Growth-differentiation transition protein 5 (gdt5), found in Dictyostelium discoideum (Social amoeba).